The following is a 577-amino-acid chain: Arginine--tRNA ligase (577 aa).

A 'HIGH' region motif is present at residues 132 to 142 (ANPTGPLHVGH).

This sequence belongs to the class-I aminoacyl-tRNA synthetase family. Monomer.

The protein resides in the cytoplasm. It carries out the reaction tRNA(Arg) + L-arginine + ATP = L-arginyl-tRNA(Arg) + AMP + diphosphate. This is Arginine--tRNA ligase from Herminiimonas arsenicoxydans.